Consider the following 306-residue polypeptide: Dirigent protein 24 (306 aa).

An N-terminal signal peptide occupies residues 1–21; the sequence is MAKALSLTIFLFLLIASNVQS. The tract at residues 36–61 is disordered; the sequence is PQVPEEEDDSPQAVTTTPTPIPLPGP.

It belongs to the plant dirigent protein family. As to quaternary structure, homodimer.

The protein resides in the secreted. It localises to the extracellular space. Its subcellular location is the apoplast. Its function is as follows. Dirigent proteins impart stereoselectivity on the phenoxy radical-coupling reaction, yielding optically active lignans from two molecules of coniferyl alcohol in the biosynthesis of lignans, flavonolignans, and alkaloids and thus plays a central role in plant secondary metabolism. This chain is Dirigent protein 24 (DIR24), found in Arabidopsis thaliana (Mouse-ear cress).